Here is a 278-residue protein sequence, read N- to C-terminus: Tryptophan 2,3-dioxygenase (278 aa).

Residues 47–51 (FIVQH), tyrosine 109, and arginine 113 contribute to the substrate site. Histidine 236 serves as a coordination point for heme. Threonine 250 is a binding site for substrate.

It belongs to the tryptophan 2,3-dioxygenase family. As to quaternary structure, homotetramer. Heme serves as cofactor.

The enzyme catalyses L-tryptophan + O2 = N-formyl-L-kynurenine. Its pathway is amino-acid degradation; L-tryptophan degradation via kynurenine pathway; L-kynurenine from L-tryptophan: step 1/2. Its function is as follows. Heme-dependent dioxygenase that catalyzes the oxidative cleavage of the L-tryptophan (L-Trp) pyrrole ring and converts L-tryptophan to N-formyl-L-kynurenine. Catalyzes the oxidative cleavage of the indole moiety. This Ralstonia pickettii (strain 12J) protein is Tryptophan 2,3-dioxygenase.